Reading from the N-terminus, the 234-residue chain is Sugar fermentation stimulation protein A (234 aa).

Residues 201-220 (LLTEAQQRGVEILAYKAEIS) constitute a DNA-binding region (H-T-H motif).

It belongs to the SfsA family.

In terms of biological role, binds to DNA non-specifically. Could be a regulatory factor involved in maltose metabolism. The protein is Sugar fermentation stimulation protein A of Escherichia fergusonii (strain ATCC 35469 / DSM 13698 / CCUG 18766 / IAM 14443 / JCM 21226 / LMG 7866 / NBRC 102419 / NCTC 12128 / CDC 0568-73).